The sequence spans 345 residues: MIPSMVWTALGAFLVINAMLLSASLLVFAERRVSAFIQNRPGPNRVGPLGLLQPFADVLKFVLKEDVQPAQSNKFIHSMAPVVMVVIAMTTASLIPFAEGVVVADLNVGVIMLLALTSISVYGVTLAGWSSNSKFSLLGGLRSAAQMVSYELSMGLAVISVVLIAGSLNFMEIVEHQSSGGALLGWNAVRNPIGCLIFIVTAFAETNRAPFDLPEAEEELVAGYHTEYSGMKFGMFFLAEYVNWFIASFFIVTLFFGGYLVPLEPQLIALFPALEGSTLLALLQFVSLMLKVSFFSFVFIWVRWTFPRFKYNQLMKVGWKYLLPIALANAILIALGVVLFGAVGL.

The next 8 helical transmembrane spans lie at 9–29 (ALGAFLVINAMLLSASLLVFA), 82–102 (VVMVVIAMTTASLIPFAEGVV), 108–128 (VGVIMLLALTSISVYGVTLAG), 154–174 (MGLAVISVVLIAGSLNFMEIV), 183–203 (LLGWNAVRNPIGCLIFIVTAF), 241–261 (YVNWFIASFFIVTLFFGGYLV), 282–302 (LLQFVSLMLKVSFFSFVFIWV), and 325–345 (IALANAILIALGVVLFGAVGL).

Belongs to the complex I subunit 1 family. In terms of assembly, NDH-1 is composed of 14 different subunits. Subunits NuoA, H, J, K, L, M, N constitute the membrane sector of the complex.

The protein resides in the cell inner membrane. It catalyses the reaction a quinone + NADH + 5 H(+)(in) = a quinol + NAD(+) + 4 H(+)(out). In terms of biological role, NDH-1 shuttles electrons from NADH, via FMN and iron-sulfur (Fe-S) centers, to quinones in the respiratory chain. The immediate electron acceptor for the enzyme in this species is believed to be ubiquinone. Couples the redox reaction to proton translocation (for every two electrons transferred, four hydrogen ions are translocated across the cytoplasmic membrane), and thus conserves the redox energy in a proton gradient. This subunit may bind ubiquinone. In Salinibacter ruber (strain DSM 13855 / M31), this protein is NADH-quinone oxidoreductase subunit H.